The following is a 156-amino-acid chain: Ribosome maturation factor RimP (156 aa).

Belongs to the RimP family.

It localises to the cytoplasm. In terms of biological role, required for maturation of 30S ribosomal subunits. The sequence is that of Ribosome maturation factor RimP from Oceanobacillus iheyensis (strain DSM 14371 / CIP 107618 / JCM 11309 / KCTC 3954 / HTE831).